A 297-amino-acid polypeptide reads, in one-letter code: 1D-myo-inositol 2-acetamido-2-deoxy-alpha-D-glucopyranoside deacetylase (297 aa).

Positions 14, 17, and 149 each coordinate Zn(2+).

It belongs to the MshB deacetylase family. The cofactor is Zn(2+).

The catalysed reaction is 1D-myo-inositol 2-acetamido-2-deoxy-alpha-D-glucopyranoside + H2O = 1D-myo-inositol 2-amino-2-deoxy-alpha-D-glucopyranoside + acetate. Catalyzes the deacetylation of 1D-myo-inositol 2-acetamido-2-deoxy-alpha-D-glucopyranoside (GlcNAc-Ins) in the mycothiol biosynthesis pathway. In Thermomonospora curvata (strain ATCC 19995 / DSM 43183 / JCM 3096 / KCTC 9072 / NBRC 15933 / NCIMB 10081 / Henssen B9), this protein is 1D-myo-inositol 2-acetamido-2-deoxy-alpha-D-glucopyranoside deacetylase.